A 401-amino-acid polypeptide reads, in one-letter code: Acetate kinase (401 aa).

Asn9 lines the Mg(2+) pocket. Lys16 serves as a coordination point for ATP. Arg88 is a binding site for substrate. The Proton donor/acceptor role is filled by Asp147. Residues 207–211 (HLGNG), 282–284 (DCR), and 333–337 (GIGEN) contribute to the ATP site. Glu388 contacts Mg(2+).

The protein belongs to the acetokinase family. Homodimer. Mg(2+) is required as a cofactor. It depends on Mn(2+) as a cofactor.

It is found in the cytoplasm. It carries out the reaction acetate + ATP = acetyl phosphate + ADP. It functions in the pathway metabolic intermediate biosynthesis; acetyl-CoA biosynthesis; acetyl-CoA from acetate: step 1/2. Functionally, catalyzes the formation of acetyl phosphate from acetate and ATP. Can also catalyze the reverse reaction. This is Acetate kinase from Haemophilus influenzae (strain PittGG).